The sequence spans 766 residues: Hypoxia-inducible factor 1-alpha (766 aa).

The disordered stretch occupies residues 1–26; sequence MDTGVVPEKKSRVSSDRRKEKSRDAA. A compositionally biased stretch (basic and acidic residues) spans 7-26; it reads PEKKSRVSSDRRKEKSRDAA. The region spanning 17-70 is the bHLH domain; it reads RRKEKSRDAARCRRGKESEVFYELAQELPLPHSVTSNLDKASIMRLAISYLHMR. PAS domains lie at 82–159 and 230–300; these read EERE…TSKK and PHPS…FAKG. Residues 304-347 form the PAC domain; it reads TGQYRMLAKRGGFVWVETQATVIYNNKNSQPQCVVCVNYVLSGI. The tract at residues 361–383 is disordered; the sequence is DMRPVKKELEEEESSEPEVSPVL. Pro426 is subject to 4-hydroxyproline. Positions 475–509 are disordered; sequence DQHLVPNTSVDTTEVSTGPDSSSTPGSHSFTEPDS. Polar residues predominate over residues 479–489; sequence VPNTSVDTTEV. A compositionally biased stretch (low complexity) spans 490 to 503; sequence STGPDSSSTPGSHS. Pro559 is modified (4-hydroxyproline). A Nuclear localization signal motif is present at residues 718–721; the sequence is LLGI. The residue at position 743 (Asn743) is a (3S)-3-hydroxyasparagine.

Efficient DNA binding requires heterodimerization of an alpha and a beta/ARNT subunit. In normoxia, is hydroxylated on Pro-426 and Pro-559. The hydroxylated prolines promote interaction with VHL, initiating rapid ubiquitination and subsequent proteasomal degradation. Under hypoxia, proline hydroxylation is impaired and ubiquitination is attenuated, resulting in stabilization. In terms of processing, in normoxia, is hydroxylated on Asn-743, thus abrogating interaction with CREBBP and EP300 and preventing transcriptional activation. Post-translationally, the iron and 2-oxoglutarate dependent 3-hydroxylation of asparagine is (S) stereospecific within HIF CTAD domains.

Its subcellular location is the cytoplasm. It is found in the nucleus. The protein localises to the nucleus speckle. Induced by reactive oxygen species (ROS). In terms of biological role, functions as a master transcriptional regulator of the adaptive response to hypoxia. Under hypoxic conditions, activates the transcription of over 40 genes, including erythropoietin, glucose transporters, glycolytic enzymes, vascular endothelial growth factor, HILPDA, and other genes whose protein products increase oxygen delivery or facilitate metabolic adaptation to hypoxia. Plays an essential role in embryonic vascularization, tumor angiogenesis and pathophysiology of ischemic disease. The sequence is that of Hypoxia-inducible factor 1-alpha (hif1a) from Oncorhynchus mykiss (Rainbow trout).